A 381-amino-acid chain; its full sequence is Putative 2-heptyl-3-hydroxy-4(1H)-quinolone synthase AqdB1 (381 aa).

This sequence belongs to the 3-hydroxybenzoate 6-hydroxylase family.

It carries out the reaction 2-heptyl-4(1H)-quinolone + NADH + O2 + H(+) = 2-heptyl-3-hydroxy-4(1H)-quinolone + NAD(+) + H2O. In terms of biological role, could be involved in the degradation of the Pseudomonas aeruginosa quorum sensing signal molecule HHQ (2-heptyl-4-quinolone) to anthranilic acid. May catalyze the hydroxylation of HHQ to PQS (2-heptyl-3-hydroxy-4-quinolone). This chain is Putative 2-heptyl-3-hydroxy-4(1H)-quinolone synthase AqdB1, found in Rhodococcus erythropolis (Arthrobacter picolinophilus).